Reading from the N-terminus, the 216-residue chain is GTP cyclohydrolase 1 (216 aa).

Residues C108, H111, and C179 each coordinate Zn(2+).

This sequence belongs to the GTP cyclohydrolase I family. Toroid-shaped homodecamer, composed of two pentamers of five dimers.

It catalyses the reaction GTP + H2O = 7,8-dihydroneopterin 3'-triphosphate + formate + H(+). Its pathway is cofactor biosynthesis; 7,8-dihydroneopterin triphosphate biosynthesis; 7,8-dihydroneopterin triphosphate from GTP: step 1/1. The sequence is that of GTP cyclohydrolase 1 from Shewanella sp. (strain ANA-3).